The chain runs to 258 residues: Snake venom serine protease PA (258 aa).

A signal peptide spans 1 to 18 (MVLIRVLANLLILQLSYA). Positions 19-24 (QKSPEL) are excised as a propeptide. In terms of domain architecture, Peptidase S1 spans 25 to 249 (VVGGDECNIN…YNDWIKSIIA (225 aa)). 6 disulfides stabilise this stretch: Cys-31–Cys-163, Cys-50–Cys-66, Cys-98–Cys-256, Cys-142–Cys-210, Cys-174–Cys-189, and Cys-200–Cys-225. Residue Asn-44 is glycosylated (N-linked (GlcNAc...) asparagine). Active-site charge relay system residues include His-65 and Asp-110. Residue Ser-204 is the Charge relay system of the active site.

The protein belongs to the peptidase S1 family. Snake venom subfamily. As to quaternary structure, monomer. As to expression, expressed by the venom gland.

Its subcellular location is the secreted. Snake venom serine protease that may act in the hemostasis system of the prey. This chain is Snake venom serine protease PA, found in Trimeresurus stejnegeri (Chinese green tree viper).